We begin with the raw amino-acid sequence, 318 residues long: MKILLANPRGFCAGVSRAVETVEKVLEVEKSPVYVRHEVVHNKVVVDSLKKKGVVFVKEVDEVPDDAVCIFSAHGVSLQVEEAASKKNLVLYDATCPLVTKVHRGVRLASNNDAECVLIGHKGHPEVQGTMGQYRSEKGAIYLVESEQDVAKLDIKNPDNLYYATQTTLSVDETQGIIESLKNRFPNIKGPKKEDICYATQNRQTAIKSMLKEIDVLVVVGSQNSSNSNRLKELATLEGIDAYLVDNPADIKSTWFENKKVCGVSAGASAPEYLVQQVITEISRVCEGDVVVEEFDGIKEEVYFPLPRLLKQKIIGTN.

Cysteine 12 contacts [4Fe-4S] cluster. Residues histidine 41 and histidine 74 each coordinate (2E)-4-hydroxy-3-methylbut-2-enyl diphosphate. Dimethylallyl diphosphate-binding residues include histidine 41 and histidine 74. Isopentenyl diphosphate-binding residues include histidine 41 and histidine 74. [4Fe-4S] cluster is bound at residue cysteine 96. Histidine 124 lines the (2E)-4-hydroxy-3-methylbut-2-enyl diphosphate pocket. Histidine 124 lines the dimethylallyl diphosphate pocket. An isopentenyl diphosphate-binding site is contributed by histidine 124. The active-site Proton donor is the glutamate 126. (2E)-4-hydroxy-3-methylbut-2-enyl diphosphate is bound at residue threonine 167. Position 197 (cysteine 197) interacts with [4Fe-4S] cluster. 4 residues coordinate (2E)-4-hydroxy-3-methylbut-2-enyl diphosphate: serine 225, serine 226, asparagine 227, and serine 269. Dimethylallyl diphosphate is bound by residues serine 225, serine 226, asparagine 227, and serine 269. The isopentenyl diphosphate site is built by serine 225, serine 226, asparagine 227, and serine 269.

Belongs to the IspH family. Requires [4Fe-4S] cluster as cofactor.

The catalysed reaction is isopentenyl diphosphate + 2 oxidized [2Fe-2S]-[ferredoxin] + H2O = (2E)-4-hydroxy-3-methylbut-2-enyl diphosphate + 2 reduced [2Fe-2S]-[ferredoxin] + 2 H(+). It carries out the reaction dimethylallyl diphosphate + 2 oxidized [2Fe-2S]-[ferredoxin] + H2O = (2E)-4-hydroxy-3-methylbut-2-enyl diphosphate + 2 reduced [2Fe-2S]-[ferredoxin] + 2 H(+). The protein operates within isoprenoid biosynthesis; dimethylallyl diphosphate biosynthesis; dimethylallyl diphosphate from (2E)-4-hydroxy-3-methylbutenyl diphosphate: step 1/1. It functions in the pathway isoprenoid biosynthesis; isopentenyl diphosphate biosynthesis via DXP pathway; isopentenyl diphosphate from 1-deoxy-D-xylulose 5-phosphate: step 6/6. Its function is as follows. Catalyzes the conversion of 1-hydroxy-2-methyl-2-(E)-butenyl 4-diphosphate (HMBPP) into a mixture of isopentenyl diphosphate (IPP) and dimethylallyl diphosphate (DMAPP). Acts in the terminal step of the DOXP/MEP pathway for isoprenoid precursor biosynthesis. This Francisella philomiragia subsp. philomiragia (strain ATCC 25017 / CCUG 19701 / FSC 153 / O#319-036) protein is 4-hydroxy-3-methylbut-2-enyl diphosphate reductase.